A 317-amino-acid chain; its full sequence is Melanocyte-stimulating hormone receptor (317 aa).

The Extracellular segment spans residues 1 to 37; it reads MPVQGSQRRLLGSLNSTPTATPHLGLAANQTGARCLE. The N-linked (GlcNAc...) asparagine glycan is linked to Asn-29. A helical membrane pass occupies residues 38–63; it reads VSIPDGLFLSLGLVSLVENVLVVTAI. At 64-72 the chain is on the cytoplasmic side; sequence AKNRNLHSP. A helical membrane pass occupies residues 73 to 93; it reads MYCFICCLALSDLLVSGSNML. Residues 94 to 118 lie on the Extracellular side of the membrane; it reads ETAVTLLLEAGALAARAAVVQQLDN. A helical membrane pass occupies residues 119 to 140; that stretch reads VIDVITCSSMLSSLCFLGAIAV. Over 141–163 the chain is Cytoplasmic; the sequence is DRYISIFYALRYHSIVTLPRARR. The chain crosses the membrane as a helical span at residues 164–183; that stretch reads AVAAIWVASVLFSMLFIAYY. Over 184-191 the chain is Extracellular; sequence DHAAVLLC. The chain crosses the membrane as a helical span at residues 192–211; it reads LVVFFLAMLVLMAVLYVHML. At 212 to 240 the chain is on the cytoplasmic side; sequence ARACQHAQGIARLHKRQRPAHQGFGLKGA. Residues 241 to 266 form a helical membrane-spanning segment; it reads ATLTILLGIFFLCWGPFFLHLTLIVL. At 267-279 the chain is on the extracellular side; that stretch reads CPQHPTCSCIFKN. Residues 280 to 300 form a helical membrane-spanning segment; that stretch reads FNLFLALIICNAIIDPLIYAF. At 301 to 317 the chain is on the cytoplasmic side; that stretch reads RSQELRRTLKEVLLCSW. A lipid anchor (S-palmitoyl cysteine) is attached at Cys-315.

Belongs to the G-protein coupled receptor 1 family. As to quaternary structure, interacts with MGRN1, but does not undergo MGRN1-mediated ubiquitination; this interaction competes with GNAS-binding and thus inhibits agonist-induced cAMP production. Interacts with OPN3; the interaction results in a decrease in MC1R-mediated cAMP signaling and ultimately a decrease in melanin production in melanocytes.

It is found in the cell membrane. Functionally, receptor for MSH (alpha, beta and gamma) and ACTH. The activity of this receptor is mediated by G proteins which activate adenylate cyclase. Mediates melanogenesis, the production of eumelanin (black/brown) and phaeomelanin (red/yellow), via regulation of cAMP signaling in melanocytes. This Miopithecus talapoin (Angolan talapoin) protein is Melanocyte-stimulating hormone receptor (MC1R).